A 73-amino-acid polypeptide reads, in one-letter code: Antimicrobial peptide lumbricin-PG (73 aa).

A signal peptide spans 1 to 14; the sequence is MLLTISDFLFLSLT. The disordered stretch occupies residues 25–48; it reads RPWSDRKNNYSGPQFTYPPEKAPP.

It is found in the secreted. Its function is as follows. Displays antimicrobial activity against the Gram-positive bacterium S.aureus ATCC 2592, the Gram-negative bacteria E.coli ATCC 25922 and P.aeruginosa ATCC 27853, and the fungus C.albicans ATCC 2002. Displays stronger activity against P.aeruginosa and S.aureus than E.coli. Displays very weak hemolytic activity. The chain is Antimicrobial peptide lumbricin-PG from Metaphire guillelmi (Earthworm).